Here is a 459-residue protein sequence, read N- to C-terminus: Vacuolar amino acid transporter 5 (459 aa).

A run of 8 helical transmembrane segments spans residues 8–28 (GVLT…PFAF), 33–53 (LMPG…GLLL), 82–102 (VVFD…YLII), 131–151 (FLDR…PLCF), 161–181 (ASMI…YHFV), 206–226 (LTTL…FSVI), 240–260 (IPIF…GTGY), and 278–298 (SIST…AFPL). Residues 335 to 351 (FNSEDPQEAPTQQNNEE) are compositionally biased toward polar residues. Residues 335 to 354 (FNSEDPQEAPTQQNNEEPNL) form a disordered region. The next 3 membrane-spanning stretches (helical) occupy residues 364–384 (IITL…TSLA), 386–406 (VLAI…PGLF), and 434–454 (LSLF…IVFL).

It belongs to the amino acid/polyamine transporter 2 family.

It is found in the vacuole membrane. In terms of biological role, probable amino acid transporter of unknown specificity. The sequence is that of Vacuolar amino acid transporter 5 (AVT5) from Saccharomyces cerevisiae (strain ATCC 204508 / S288c) (Baker's yeast).